A 662-amino-acid chain; its full sequence is Intracellular exo-alpha-(1-&gt;5)-L-arabinofuranosidase (662 aa).

Alpha-L-arabinofuranose is bound by residues Glu-27, Asn-72, and Asn-174. Residue Glu-175 is the Proton donor/acceptor of the active site. Tyr-246, Glu-294, and Gln-352 together coordinate alpha-L-arabinofuranose. The Nucleophile role is filled by Glu-294. Disordered regions lie at residues 454-483 (LADADPDARNTLAEPERVVPHPVDGTSLRD), 497-548 (SIRC…RTAR), and 588-662 (WTRW…ARRC). Over residues 519–533 (TGTPPAAPPSSSSAP) the composition is skewed to low complexity. Over residues 537 to 547 (PTARRSPDRTA) the composition is skewed to basic and acidic residues. 3 stretches are compositionally biased toward low complexity: residues 590–603 (RWAPAPRSGSPSRR), 628–641 (RRSPPGSAPGTPAP), and 649–662 (AGASRGAPRTARRC).

Belongs to the glycosyl hydrolase 51 family. In terms of assembly, homohexamer; trimer of dimers.

The protein localises to the cytoplasm. It carries out the reaction Hydrolysis of terminal non-reducing alpha-L-arabinofuranoside residues in alpha-L-arabinosides.. The protein operates within glycan metabolism; L-arabinan degradation. In terms of biological role, involved in the degradation of arabinan and is a key enzyme in the complete degradation of the plant cell wall. Catalyzes the cleavage of terminal alpha-(1-&gt;5)-arabinofuranosyl bonds in different hemicellulosic homopolysaccharides (arabino-oligoxylosides, branched and debranched arabinans). It acts rapidly on the short-chain arabino-oligoxylosides from digestion of xylan with xylanases. It hydrolyzes slowly arabinan and arabinoxylan from wheat and rye flour. The polypeptide is Intracellular exo-alpha-(1-&gt;5)-L-arabinofuranosidase (Streptomyces lividans).